A 158-amino-acid polypeptide reads, in one-letter code: Cyclic pyranopterin monophosphate synthase (158 aa).

Substrate contacts are provided by residues 76 to 78 and 114 to 115; these read LCH and ME. Asp129 is a catalytic residue.

The protein belongs to the MoaC family. As to quaternary structure, homohexamer; trimer of dimers.

It carries out the reaction (8S)-3',8-cyclo-7,8-dihydroguanosine 5'-triphosphate = cyclic pyranopterin phosphate + diphosphate. Its pathway is cofactor biosynthesis; molybdopterin biosynthesis. In terms of biological role, catalyzes the conversion of (8S)-3',8-cyclo-7,8-dihydroguanosine 5'-triphosphate to cyclic pyranopterin monophosphate (cPMP). The protein is Cyclic pyranopterin monophosphate synthase of Shewanella loihica (strain ATCC BAA-1088 / PV-4).